We begin with the raw amino-acid sequence, 431 residues long: Beta-lactamase hydrolase-like protein (431 aa).

Zn(2+) contacts are provided by His-212, His-214, and His-286. Residue Asp-309 coordinates substrate.

Belongs to the metallo-beta-lactamase superfamily. It depends on Zn(2+) as a cofactor.

In terms of biological role, could play a role in cell adherence or biofilm development. The polypeptide is Beta-lactamase hydrolase-like protein (Xylella fastidiosa (strain 9a5c)).